Consider the following 449-residue polypeptide: MGRMFGTDGVRGIANKELTADLAYKLGKAGAFILTEGTHRPKILVGMDTRISGDMLESALVAGILSVGAEAICVGVIPTPAIAYLTRKYNADAGVVISASHNPVEYNGIKFFNKNGYKLSDELEDSIQALIRDDFKDVPVLTGENIGRKIEEDGEAIRDYIDFAKSTIKGDLKGLKVALDCANGASYITSVEAFKELGAEVHVINNKPDGININRNSGSTHPEDLMEYVVKNNCHMGLAFDGDADRCLAIDEKGNLINGDFILAICGKELKKQGRLKKNTIVVTVMSNLGLDIAMKKEEINTIKTKVGDRYVLEEMLKNDYAIGGEQSGHIIFSDYNTTGDGLVTALQLAHIVKESGKTFSELCSIMKELPQVLVNAKVSNDQKDIYLKDEEIKSEIDTITKNLDGSGRVLIRPSGTEPLVRVMLEGENQKEIDKLAHGLAKLIENKVK.

The Phosphoserine intermediate role is filled by serine 100. 4 residues coordinate Mg(2+): serine 100, aspartate 241, aspartate 243, and aspartate 245. The residue at position 100 (serine 100) is a Phosphoserine.

The protein belongs to the phosphohexose mutase family. The cofactor is Mg(2+). Activated by phosphorylation.

The catalysed reaction is alpha-D-glucosamine 1-phosphate = D-glucosamine 6-phosphate. Catalyzes the conversion of glucosamine-6-phosphate to glucosamine-1-phosphate. This Clostridium botulinum (strain Kyoto / Type A2) protein is Phosphoglucosamine mutase.